Here is a 911-residue protein sequence, read N- to C-terminus: MDNKTDHKNDLNSQPVPSSAPHKERLTPMMEQYIEIKAVNSDSLLFYRMGDFYELFFNDAIEAAQVLGITLTTRGKHLGEDIPMCGVPVHAADDYLQKLISSGYRVAVCEQTEDPAEAKKRGSKSIVRRDVVRLVTPGTITEEKLLDPTRANYLMTLARIKTSKGEEFALSWIDISTGIFRVTESHPEKLLADIMRVDPQEIIVADSFFHDKSHKSLFNVLDRIVSPQHVSLFDAVTAERDICSYFKLSTLEGVADYSRSELSAIAAAIRYIEKTQITHRPPLMRPERQNENATLFIDAATRLSLELIRTTSGQRDGSLLKAIDRTVTGGGSRLLVDRLIAPLTTPSAIDKRLDSIAFFLRNTSLAEAIQLILKGGPDMPRAVSRLALGRGGPRDIASIQRGFEIIHGLNQLLNNELLPQEISDVQQVFSHLPTALHFRLEQALSDDLPLLKRDGGFIRPNYHKELDEMRALRDESRLIIAELQAQYAKETDIKTLKIKHNNILGYFIEITNLQATALTNTPQAKARFIHRQTLANVMRFTTTELVELEGRIAHAATHAMTLELEIFDTLVHEITEQVDFIRKAAEALAILDVSVALARLAEEQEYCRPKIDQSLTFRITAGRHPVVEQALRKQAAEPFVANNCDLSVQKNHQYAAIWLLTGPNMGGKSTFLRQNALITIMAQMGSFVPASSAHIGVVDRLFSRVGASDDLARGRSTFMMEMVETATILNHASSHSLVILDEIGRGTSTFDGLSIAWAAVEYLHEVNQCRAILATHFHEMTALTEKLDRLYNVTMKVKNWDGDVVFLHEVMPGAADRSYGVQVAKLAGLPTAVITRATDVLHQLEQGETAGKGNKLIDDLPLFSLKTTSLINEETNKHCMLHEALKNIYPDELSPKEALEVLYRLKQLEKK.

Residues 1–10 show a composition bias toward basic and acidic residues; sequence MDNKTDHKND. The disordered stretch occupies residues 1–24; sequence MDNKTDHKNDLNSQPVPSSAPHKE. Residue 662–669 coordinates ATP; that stretch reads GPNMGGKS.

Belongs to the DNA mismatch repair MutS family.

Functionally, this protein is involved in the repair of mismatches in DNA. It is possible that it carries out the mismatch recognition step. This protein has a weak ATPase activity. The chain is DNA mismatch repair protein MutS from Bartonella quintana (strain Toulouse) (Rochalimaea quintana).